Reading from the N-terminus, the 928-residue chain is Type II inositol 3,4-bisphosphate 4-phosphatase (928 aa).

Positions 1–13 are enriched in basic and acidic residues; the sequence is MEIKEEGTSEEGQ. Disordered regions lie at residues 1–23, 481–516, and 548–575; these read MEIKEEGTSEEGQHFLPAAQAND, ILRKPPSPKVSTEEKSSQHDSPQQLRRQDSIPHHSD, and SRNDKSTGGDSSKDGDADPNLEDSLTSH. The 143-residue stretch at 23–165 folds into the C2 domain; that stretch reads DPEDIQFTSI…LKSKEQLLSL (143 aa). Composition is skewed to basic and acidic residues over residues 506 to 516 and 548 to 563; these read RRQDSIPHHSD and SRNDKSTGGDSSKDGD.

This sequence belongs to the inositol 3,4-bisphosphate 4-phosphatase family.

It catalyses the reaction a 1,2-diacyl-sn-glycero-3-phospho-(1D-myo-inositol-3,4-bisphosphate) + H2O = a 1,2-diacyl-sn-glycero-3-phospho-(1D-myo-inositol-3-phosphate) + phosphate. The catalysed reaction is 1D-myo-inositol 3,4-bisphosphate + H2O = 1D-myo-inositol 3-phosphate + phosphate. The enzyme catalyses 1D-myo-inositol 1,3,4-trisphosphate + H2O = 1D-myo-inositol 1,3-bisphosphate + phosphate. Its pathway is signal transduction; phosphatidylinositol signaling pathway. Its activity is regulated as follows. Strongly inhibited by inositol hexakisphosphate. Functionally, catalyzes the hydrolysis of the 4-position phosphate of phosphatidylinositol 3,4-bisphosphate, inositol 1,3,4-trisphosphate and inositol 3,4-bisphosphate. Plays a role in the late stages of macropinocytosis by dephosphorylating phosphatidylinositol 3,4-bisphosphate in membrane ruffles. The lipid phosphatase activity is critical for tumor suppressor function. Antagonizes the PI3K-AKT/PKB signaling pathway by dephosphorylating phosphoinositides and thereby modulating cell cycle progression and cell survival. This Rattus norvegicus (Rat) protein is Type II inositol 3,4-bisphosphate 4-phosphatase (Inpp4b).